A 273-amino-acid polypeptide reads, in one-letter code: 2,3,4,5-tetrahydropyridine-2,6-dicarboxylate N-succinyltransferase (273 aa).

2 residues coordinate substrate: Arg106 and Asp143.

The protein belongs to the transferase hexapeptide repeat family. As to quaternary structure, homotrimer.

The protein resides in the cytoplasm. The enzyme catalyses (S)-2,3,4,5-tetrahydrodipicolinate + succinyl-CoA + H2O = (S)-2-succinylamino-6-oxoheptanedioate + CoA. It functions in the pathway amino-acid biosynthesis; L-lysine biosynthesis via DAP pathway; LL-2,6-diaminopimelate from (S)-tetrahydrodipicolinate (succinylase route): step 1/3. This Wolbachia sp. subsp. Brugia malayi (strain TRS) protein is 2,3,4,5-tetrahydropyridine-2,6-dicarboxylate N-succinyltransferase.